A 149-amino-acid chain; its full sequence is MAEQLTEEQIAEFKEAFSLFDKDGDGCITTKELGTVMRSLGQNPTEAELQDMISEVDADQNGTIDFPEFLNLMARKMKDTDSEEELKEAFKVFDKDQNGYISAADVRHVMTNLGEKLTDEEVDEMIREADMDGDGQVNYEEFVRMMLAK.

At alanine 2 the chain carries N-acetylalanine. EF-hand domains are found at residues 8–43 (EQIA…LGQN), 44–79 (PTEA…KMKD), 81–116 (DSEE…LGEK), and 117–149 (LTDE…MLAK). Aspartate 21, aspartate 23, aspartate 25, cysteine 27, glutamate 32, aspartate 57, aspartate 59, asparagine 61, threonine 63, glutamate 68, aspartate 94, aspartate 96, asparagine 98, tyrosine 100, and aspartate 105 together coordinate Ca(2+). An N6,N6,N6-trimethyllysine modification is found at lysine 116. Residues aspartate 130, aspartate 132, aspartate 134, glutamine 136, and glutamate 141 each contribute to the Ca(2+) site.

This sequence belongs to the calmodulin family.

Its function is as follows. Calmodulin mediates the control of a large number of enzymes, ion channels and other proteins by Ca(2+). Among the enzymes to be stimulated by the calmodulin-Ca(2+) complex are a number of protein kinases and phosphatases. This Petunia hybrida (Petunia) protein is Calmodulin-2 (CAM72).